Consider the following 81-residue polypeptide: Large ribosomal subunit protein bL31B (81 aa).

This sequence belongs to the bacterial ribosomal protein bL31 family. Type B subfamily. As to quaternary structure, part of the 50S ribosomal subunit.

The sequence is that of Large ribosomal subunit protein bL31B from Borreliella burgdorferi (strain ATCC 35210 / DSM 4680 / CIP 102532 / B31) (Borrelia burgdorferi).